Reading from the N-terminus, the 123-residue chain is UPF0102 protein PSHAa2523 (123 aa).

Belongs to the UPF0102 family.

The sequence is that of UPF0102 protein PSHAa2523 from Pseudoalteromonas translucida (strain TAC 125).